A 254-amino-acid polypeptide reads, in one-letter code: Nickel import ATP-binding protein NikD (254 aa).

In terms of domain architecture, ABC transporter spans 2-241; that stretch reads PQQIELRNIA…PKHAVTRSLV (240 aa). ATP is bound at residue 36–43; that stretch reads GGSGSGKS.

It belongs to the ABC transporter superfamily. Nickel importer (TC 3.A.1.5.3) family. The complex is composed of two ATP-binding proteins (NikD and NikE), two transmembrane proteins (NikB and NikC) and a solute-binding protein (NikA).

The protein resides in the cell inner membrane. It carries out the reaction Ni(2+)(out) + ATP + H2O = Ni(2+)(in) + ADP + phosphate + H(+). Functionally, part of the ABC transporter complex NikABCDE involved in nickel import. Responsible for energy coupling to the transport system. The chain is Nickel import ATP-binding protein NikD from Escherichia coli (strain UTI89 / UPEC).